The following is a 532-amino-acid chain: Probable calcium-binding mitochondrial carrier CBG00135 (532 aa).

4 consecutive EF-hand domains span residues E70–H105, P107–I136, A137–N172, and L173–T208. The Ca(2+) site is built by D83, D85, D87, S89, and D94. Residues D150, N152, D154, E156, and E161 each coordinate Ca(2+). 3 Solcar repeats span residues G243–W329, L339–C425, and P436–Q526. 6 consecutive transmembrane segments (helical) span residues L249 to F266, G304 to Y323, S349 to M362, G400 to Y419, L442 to L459, and G501 to V518.

The protein belongs to the mitochondrial carrier (TC 2.A.29) family.

It is found in the mitochondrion inner membrane. Calcium-dependent mitochondrial solute carrier. This is Probable calcium-binding mitochondrial carrier CBG00135 from Caenorhabditis briggsae.